We begin with the raw amino-acid sequence, 394 residues long: MKKVILSLALGTFGLGMAEFGIMGVLTELAHNVGISIPAAGHMISYYALGVVVGAPIIALFSSRYSLKHILLFLVALCVIGNAMFTLSSSYLMLAIGRLVSGFPHGAFFGVGAIVLSKIIKPGKVTAAVAGMVSGMTVANLLGIPLGTYLSQEFSWRYTFLLIAVFNIAVMASVYFWVPDIRDEAKGNLREQFHFLRSPAPWLIFAATMFGNAGVFAWFSYVKPYMMFISGFSETAMTFIMMLVGLGMVLGNMLSGRISGRYSPLRIAAVTDFIIVLALLMLFFCGGMKTTSLIFAFICCAGLFALSAPLQILLLQNAKGGELLGAAGGQIAFNLGSAVGAYCGGMMLTLGLAYNYVALPAALLSFAAMSSLLLYGRYKRQQAADTPVLAKPLG.

Topologically, residues 1-4 (MKKV) are cytoplasmic. Residues 5-27 (ILSLALGTFGLGMAEFGIMGVLT) traverse the membrane as a helical segment. Topologically, residues 28-41 (ELAHNVGISIPAAG) are periplasmic. A helical membrane pass occupies residues 42-63 (HMISYYALGVVVGAPIIALFSS). Topologically, residues 64 to 69 (RYSLKH) are cytoplasmic. The chain crosses the membrane as a helical span at residues 70 to 89 (ILLFLVALCVIGNAMFTLSS). The Periplasmic portion of the chain corresponds to 90-93 (SYLM). The helical transmembrane segment at 94–116 (LAIGRLVSGFPHGAFFGVGAIVL) threads the bilayer. The Cytoplasmic portion of the chain corresponds to 117–128 (SKIIKPGKVTAA). A helical transmembrane segment spans residues 129–151 (VAGMVSGMTVANLLGIPLGTYLS). At 152 to 155 (QEFS) the chain is on the periplasmic side. Residues 156 to 178 (WRYTFLLIAVFNIAVMASVYFWV) traverse the membrane as a helical segment. Topologically, residues 179 to 198 (PDIRDEAKGNLREQFHFLRS) are cytoplasmic. The helical transmembrane segment at 199–221 (PAPWLIFAATMFGNAGVFAWFSY) threads the bilayer. The Periplasmic segment spans residues 222-235 (VKPYMMFISGFSET). Residues 236–255 (AMTFIMMLVGLGMVLGNMLS) form a helical membrane-spanning segment. Residues 256–261 (GRISGR) are Cytoplasmic-facing. The chain crosses the membrane as a helical span at residues 262–284 (YSPLRIAAVTDFIIVLALLMLFF). The Periplasmic segment spans residues 285-293 (CGGMKTTSL). Residues 294–316 (IFAFICCAGLFALSAPLQILLLQ) form a helical membrane-spanning segment. The Cytoplasmic portion of the chain corresponds to 317-322 (NAKGGE). The helical transmembrane segment at 323–342 (LLGAAGGQIAFNLGSAVGAY) threads the bilayer. At 343–351 (CGGMMLTLG) the chain is on the periplasmic side. A helical membrane pass occupies residues 352–374 (LAYNYVALPAALLSFAAMSSLLL). Topologically, residues 375–394 (YGRYKRQQAADTPVLAKPLG) are cytoplasmic.

The protein belongs to the major facilitator superfamily.

It is found in the cell inner membrane. Functionally, may be involved in either the transport or processing of arabinose polymers. The protein is Putative transporter AraJ (araJ) of Escherichia coli (strain K12).